Consider the following 215-residue polypeptide: Redox-sensing transcriptional repressor Rex (215 aa).

The segment at residues 18–57 (LYYRFLKNLHASGKQRVSSAELSDAVKVDSATIRRDFSYF) is a DNA-binding region (H-T-H motif). Position 92–97 (92–97 (GVGNLG)) interacts with NAD(+).

Belongs to the transcriptional regulatory Rex family. As to quaternary structure, homodimer.

It is found in the cytoplasm. In terms of biological role, modulates transcription in response to changes in cellular NADH/NAD(+) redox state. The sequence is that of Redox-sensing transcriptional repressor Rex from Bacillus licheniformis (strain ATCC 14580 / DSM 13 / JCM 2505 / CCUG 7422 / NBRC 12200 / NCIMB 9375 / NCTC 10341 / NRRL NRS-1264 / Gibson 46).